Consider the following 782-residue polypeptide: General transcription and DNA repair factor IIH helicase/translocase subunit XPB (782 aa).

Over residues 1 to 11 (MGRKDKSDREK) the composition is skewed to basic and acidic residues. Disordered stretches follow at residues 1-47 (MGRK…VDES) and 211-242 (TISS…SGTQ). A Nuclear localization signal motif is present at residues 6–17 (KSDREKKSKKRY). Over residues 19–28 (EDEEEDEEVI) the composition is skewed to acidic residues. Residues 211–223 (TISSKSAISKSQQ) are compositionally biased toward low complexity. Over residues 224–242 (DNGGPSSSQPADGQRSGTQ) the composition is skewed to polar residues. Residues 326–487 (MFGNGRARSG…DLNFLIGPKL (162 aa)) enclose the Helicase ATP-binding domain. An ATP-binding site is contributed by 339-346 (LPCGAGKS). A DEVH box motif is present at residues 440–443 (DEVH). The region spanning 541–701 (RACQFLIRFH…LAGMEEEDLM (161 aa)) is the Helicase C-terminal domain.

This sequence belongs to the helicase family. RAD25/XPB subfamily. Component of the 7-subunit TFIIH core complex composed of XPB/ERCC3, XPD/ERCC2, GTF2H1, GTF2H2, GTF2H3, GTF2H4 and GTF2H5, which is active in NER. The core complex associates with the 3-subunit CDK-activating kinase (CAK) module composed of CCNH/cyclin H, CDK7 and MNAT1 to form the 10-subunit holoenzyme (holo-TFIIH) active in transcription. Interacts with PUF60. Interacts with ATF7IP. Interacts with Epstein-Barr virus EBNA2.

The protein resides in the nucleus. It catalyses the reaction Couples ATP hydrolysis with the unwinding of duplex DNA by translocating in the 3'-5' direction.. The enzyme catalyses ATP + H2O = ADP + phosphate + H(+). Its function is as follows. ATP-dependent 3'-5' DNA helicase/translocase; binds dsDNA rather than ssDNA, unzipping it in a translocase rather than classical helicase activity. Component of the general transcription and DNA repair factor IIH (TFIIH) core complex. When complexed to CDK-activating kinase (CAK), involved in RNA transcription by RNA polymerase II. The ATPase activity of XPB/ERCC3, but not its helicase activity, is required for DNA opening; it may wrap around the damaged DNA wedging it open, causing localized melting and twisting that allows XPD/ERCC2 helicase to anchor. The ATP-dependent helicase activity of XPB/ERCC3 may be required for promoter escape. Also involved in transcription-coupled nucleotide excision repair (NER) of damaged DNA. In NER, TFIIH acts by opening DNA around the lesion to allow the excision of the damaged oligonucleotide and its replacement by a new DNA fragment. The polypeptide is General transcription and DNA repair factor IIH helicase/translocase subunit XPB (ercc3) (Danio rerio (Zebrafish)).